The sequence spans 409 residues: Salivary endonuclease (409 aa).

Residues 1–20 (MHLQLNLCAILLSVLNGIQG) form the signal peptide. N-linked (GlcNAc...) asparagine glycosylation is found at N37 and N102. H216 functions as the Proton acceptor in the catalytic mechanism. Mg(2+) is bound at residue N246. N351 and N381 each carry an N-linked (GlcNAc...) asparagine glycan.

Belongs to the DNA/RNA non-specific endonuclease family. Mg(2+) is required as a cofactor. In terms of tissue distribution, salivary gland.

Its subcellular location is the secreted. Its function is as follows. Hydrolyzes single-stranded and double-stranded DNA with little sequence specificity. Inhibits contact pathway of blood coagulation in the host by preventing activation of coagulation factor XII (F12) triggered by soluble DNA. Modestly up-regulates expression of CSF2, CXCL1 and CXCL8 in cultured human dermal microvascular endothelial cells. At higher doses promotes host neutrophil recruitment at the injection site in mouse model. Functionally, (Microbial infection) Increases Leishmania major survival in the host by disrupting parasite-induced neutrophil extracellular traps. Exacerbates L.major parasite infectivity and increases cutaneous lesions in mouse model. The protein is Salivary endonuclease of Lutzomyia longipalpis (Sand fly).